The chain runs to 285 residues: MDFSHSQQNECARSSVACKWSLAEAQQKLNSLALHNSESMDQEQAMAQAELSELQRSEEEWRRKEAALSQGENWGLPTTDGLNQDVFNKSFINQVKKSIDGEDQSISFIQKYEAKIRHFGMLSRWNDSQHFLSEYPDLVSEETAKYLLLWCSHLESEQKTALMEQVAHQAVVMQFIIEMAKSCNMDPRGCFRLFFQKAKEEKEGYFEAFKSELEILKSKVRQHAECQRYEAAILRKPAFPPDLGHMGTQQCHQKDVLQSHPNAAVCHLNPMEHAEDEDLKMMDTL.

Residues 34–54 (LHNSESMDQEQAMAQAELSEL) are disordered. A coiled-coil region spans residues 35–73 (HNSESMDQEQAMAQAELSELQRSEEEWRRKEAALSQGEN).

It belongs to the CDC37 family. In terms of assembly, forms complexes with Hsp70 and Hsp90.

The protein resides in the cytoplasm. Co-chaperone that binds to numerous proteins and promotes their interaction with Hsp70 and Hsp90. This Xenopus tropicalis (Western clawed frog) protein is Hsp90 co-chaperone Cdc37-like 1 (cdc37l1).